The primary structure comprises 296 residues: Phosphoribosylaminoimidazole-succinocarboxamide synthase (296 aa).

It belongs to the SAICAR synthetase family.

The catalysed reaction is 5-amino-1-(5-phospho-D-ribosyl)imidazole-4-carboxylate + L-aspartate + ATP = (2S)-2-[5-amino-1-(5-phospho-beta-D-ribosyl)imidazole-4-carboxamido]succinate + ADP + phosphate + 2 H(+). Its pathway is purine metabolism; IMP biosynthesis via de novo pathway; 5-amino-1-(5-phospho-D-ribosyl)imidazole-4-carboxamide from 5-amino-1-(5-phospho-D-ribosyl)imidazole-4-carboxylate: step 1/2. This Lachnospira eligens (strain ATCC 27750 / DSM 3376 / VPI C15-48 / C15-B4) (Eubacterium eligens) protein is Phosphoribosylaminoimidazole-succinocarboxamide synthase.